Reading from the N-terminus, the 490-residue chain is E3 ubiquitin-protein ligase Hakai (490 aa).

The interval 34-60 is disordered; sequence QANKAKPAPRTQRTINRMPAKAPPGDE. The RING-type zinc-finger motif lies at 108–148; sequence CDKCGLPIKIYGRMIPCKHVFCYDCAILHEKKGDKMCPGCS. Residues 147–205 are HYB domain; the sequence is CSDPVQRIEQCTRGSLFMCSIVQGCKRTYLSQRDLQAHINHRHMRAGKPVTRASLENVH. Residues 163 to 189 form a C2H2-type zinc finger; sequence FMCSIVQGCKRTYLSQRDLQAHINHRH. 3 positions are modified to phosphoserine: S200, S284, and S289. The disordered stretch occupies residues 254 to 490; it reads QPHEDIRAPP…DQTRYRPYYQ (237 aa). 3 stretches are compositionally biased toward pro residues: residues 341-358, 371-388, and 398-422; these read APPP…PHPP, APPP…PPPG, and MNHP…PPHH. The segment covering 426–441 has biased composition (polar residues); it reads NSLPQFTEDQGTLSPP. Residues 456-477 are compositionally biased toward pro residues; sequence PRGPPPPPRLQGPPSQTPLPGP.

The protein belongs to the Hakai family. As to quaternary structure, homodimer. Interacts with tyrosine-phosphorylated SRC substrates. Component of the WMM complex, a N6-methyltransferase complex composed of a catalytic subcomplex, named MAC, and of an associated subcomplex, named MACOM. The MAC subcomplex is composed of METTL3 and METTL14. The MACOM subcomplex is composed of WTAP, ZC3H13, CBLL1/HAKAI, VIRMA, and, in some cases of RBM15 (RBM15 or RBM15B). Also a component of a MACOM-like complex, named WTAP complex, composed of WTAP, ZC3H13, CBLL1, VIRMA, RBM15, BCLAF1 and THRAP3. Post-translationally, phosphorylated on tyrosine residues.

It localises to the nucleus speckle. The protein resides in the nucleus. It is found in the nucleoplasm. Its subcellular location is the cytoplasm. The enzyme catalyses S-ubiquitinyl-[E2 ubiquitin-conjugating enzyme]-L-cysteine + [acceptor protein]-L-lysine = [E2 ubiquitin-conjugating enzyme]-L-cysteine + N(6)-ubiquitinyl-[acceptor protein]-L-lysine.. It participates in protein modification; protein ubiquitination. E3 ubiquitin-protein ligase that mediates ubiquitination of several tyrosine-phosphorylated Src substrates, including CDH1, CTTN and DOK1. Targets CDH1 for endocytosis and degradation. Associated component of the WMM complex, a complex that mediates N6-methyladenosine (m6A) methylation of RNAs, a modification that plays a role in the efficiency of mRNA splicing and RNA processing. Its function in the WMM complex is unknown. The protein is E3 ubiquitin-protein ligase Hakai of Macaca fascicularis (Crab-eating macaque).